Here is a 212-residue protein sequence, read N- to C-terminus: Hydroxyacylglutathione hydrolase GloC (212 aa).

Zn(2+) is bound by residues His55, His57, Asp59, His60, His132, Asp151, and His192.

Belongs to the metallo-beta-lactamase superfamily. Glyoxalase II family. Zn(2+) serves as cofactor.

It catalyses the reaction an S-(2-hydroxyacyl)glutathione + H2O = a 2-hydroxy carboxylate + glutathione + H(+). The catalysed reaction is (R)-S-lactoylglutathione + H2O = (R)-lactate + glutathione + H(+). It participates in secondary metabolite metabolism; methylglyoxal degradation; (R)-lactate from methylglyoxal: step 2/2. Its function is as follows. Type II glyoxalase, isozyme of GloB, that hydrolyzes (R)-S-lactoylglutathione to (R)-lactate and glutathione. Plays a role in methylglyoxal (MG) detoxification. The chain is Hydroxyacylglutathione hydrolase GloC from Haemophilus influenzae (strain ATCC 51907 / DSM 11121 / KW20 / Rd).